Reading from the N-terminus, the 1089-residue chain is Probable transport protein MmpL8 (1089 aa).

The tract at residues 1–26 is disordered; that stretch reads MCDVLMQPVRTPRPSTNLRSKPLRPT. 12 helical membrane passes run 44 to 64, 222 to 242, 257 to 277, 316 to 336, 349 to 369, 400 to 420, 555 to 575, 874 to 894, 898 to 918, 930 to 950, 973 to 993, and 996 to 1016; these read WVVI…VPSL, ITIL…TMVL, LVAI…IFMS, IGKV…GMVF, LGIS…ALMV, KTHL…AGLA, AIST…LLGG, IIAM…RAIV, YLIG…VIVF, IPGL…MLLI, GGVI…LVFA, and GSVV…TFLV. A disordered region spans residues 1056-1078; sequence RTKRKPLLPKEEEEQSPPDDDDL. The span at 1066–1078 shows a compositional bias: acidic residues; sequence EEEEQSPPDDDDL.

Belongs to the resistance-nodulation-cell division (RND) (TC 2.A.6) family. MmpL subfamily.

It localises to the cell membrane. In Mycobacterium bovis (strain ATCC BAA-935 / AF2122/97), this protein is Probable transport protein MmpL8 (mmpL8).